A 316-amino-acid chain; its full sequence is Aspartate carbamoyltransferase catalytic subunit (316 aa).

Residues Arg66 and Thr67 each coordinate carbamoyl phosphate. L-aspartate is bound at residue Lys94. Residues Arg116, His146, and Gln149 each coordinate carbamoyl phosphate. Residues Arg180 and Arg235 each contribute to the L-aspartate site. Residues Gly276 and Pro277 each coordinate carbamoyl phosphate.

It belongs to the aspartate/ornithine carbamoyltransferase superfamily. ATCase family. In terms of assembly, heterododecamer (2C3:3R2) of six catalytic PyrB chains organized as two trimers (C3), and six regulatory PyrI chains organized as three dimers (R2).

The enzyme catalyses carbamoyl phosphate + L-aspartate = N-carbamoyl-L-aspartate + phosphate + H(+). The protein operates within pyrimidine metabolism; UMP biosynthesis via de novo pathway; (S)-dihydroorotate from bicarbonate: step 2/3. In terms of biological role, catalyzes the condensation of carbamoyl phosphate and aspartate to form carbamoyl aspartate and inorganic phosphate, the committed step in the de novo pyrimidine nucleotide biosynthesis pathway. In Stenotrophomonas maltophilia (strain K279a), this protein is Aspartate carbamoyltransferase catalytic subunit.